The following is a 349-amino-acid chain: Phosphoribosylformylglycinamidine cyclo-ligase (349 aa).

This sequence belongs to the AIR synthase family.

Its subcellular location is the cytoplasm. It catalyses the reaction 2-formamido-N(1)-(5-O-phospho-beta-D-ribosyl)acetamidine + ATP = 5-amino-1-(5-phospho-beta-D-ribosyl)imidazole + ADP + phosphate + H(+). It participates in purine metabolism; IMP biosynthesis via de novo pathway; 5-amino-1-(5-phospho-D-ribosyl)imidazole from N(2)-formyl-N(1)-(5-phospho-D-ribosyl)glycinamide: step 2/2. The protein is Phosphoribosylformylglycinamidine cyclo-ligase of Bordetella avium (strain 197N).